Here is a 204-residue protein sequence, read N- to C-terminus: Thiamine-phosphate synthase (204 aa).

4-amino-2-methyl-5-(diphosphooxymethyl)pyrimidine is bound by residues 37–41 (QVREK) and asparagine 69. Mg(2+) contacts are provided by aspartate 70 and aspartate 89. Residue serine 108 coordinates 4-amino-2-methyl-5-(diphosphooxymethyl)pyrimidine. Position 134–136 (134–136 (TGT)) interacts with 2-[(2R,5Z)-2-carboxy-4-methylthiazol-5(2H)-ylidene]ethyl phosphate. Lysine 137 contributes to the 4-amino-2-methyl-5-(diphosphooxymethyl)pyrimidine binding site. Residues glycine 165 and 185–186 (IS) each bind 2-[(2R,5Z)-2-carboxy-4-methylthiazol-5(2H)-ylidene]ethyl phosphate.

It belongs to the thiamine-phosphate synthase family. The cofactor is Mg(2+).

It carries out the reaction 2-[(2R,5Z)-2-carboxy-4-methylthiazol-5(2H)-ylidene]ethyl phosphate + 4-amino-2-methyl-5-(diphosphooxymethyl)pyrimidine + 2 H(+) = thiamine phosphate + CO2 + diphosphate. It catalyses the reaction 2-(2-carboxy-4-methylthiazol-5-yl)ethyl phosphate + 4-amino-2-methyl-5-(diphosphooxymethyl)pyrimidine + 2 H(+) = thiamine phosphate + CO2 + diphosphate. The catalysed reaction is 4-methyl-5-(2-phosphooxyethyl)-thiazole + 4-amino-2-methyl-5-(diphosphooxymethyl)pyrimidine + H(+) = thiamine phosphate + diphosphate. It participates in cofactor biosynthesis; thiamine diphosphate biosynthesis; thiamine phosphate from 4-amino-2-methyl-5-diphosphomethylpyrimidine and 4-methyl-5-(2-phosphoethyl)-thiazole: step 1/1. Functionally, condenses 4-methyl-5-(beta-hydroxyethyl)thiazole monophosphate (THZ-P) and 2-methyl-4-amino-5-hydroxymethyl pyrimidine pyrophosphate (HMP-PP) to form thiamine monophosphate (TMP). The polypeptide is Thiamine-phosphate synthase (Clostridium novyi (strain NT)).